The following is a 219-amino-acid chain: Claudin-6 (219 aa).

Residues 1–7 lie on the Cytoplasmic side of the membrane; that stretch reads MASTGLQ. Residues 8 to 28 traverse the membrane as a helical segment; it reads ILGIVLTLLGWVNALVSCALP. Over 29-81 the chain is Extracellular; the sequence is MWKVTAFIGNSIVVAQMVWEGLWMSCVVQSTGQMQCKVYDSLLALPQDLQAAR. The helical transmembrane segment at 82 to 102 threads the bilayer; it reads ALCVVTLLIVLLGLLVYLAGA. Topologically, residues 103-116 are cytoplasmic; the sequence is KCTTCVEDRNSKSR. Residues 117 to 137 form a helical membrane-spanning segment; the sequence is LVLISGIIFVISGVLTLIPVC. Over 138–163 the chain is Extracellular; that stretch reads WTAHSIIQDFYNPLVADAQKRELGAS. Residues 164–184 form a helical membrane-spanning segment; it reads LYLGWAASGLLLLGGGLLCCA. Topologically, residues 185–219 are cytoplasmic; it reads CSSGGTQGPRHYMACYSTSVPHSRGPSEYPTKNYV. Residues serine 201, serine 203, serine 207, and serine 211 each carry the phosphoserine modification. Residues 218-219 are interactions with TJP1, TJP2 and TJP3; that stretch reads YV.

Belongs to the claudin family. In terms of assembly, directly interacts with TJP1/ZO-1, TJP2/ZO-2 and TJP3/ZO-3. Interacts with CLDN1, CD81 and OCLN. Expressed mostly in embryonic tissues.

It localises to the cell junction. Its subcellular location is the tight junction. The protein localises to the cell membrane. Its function is as follows. Plays a major role in tight junction-specific obliteration of the intercellular space, through calcium-independent cell-adhesion activity. The protein is Claudin-6 (Cldn6) of Mus musculus (Mouse).